We begin with the raw amino-acid sequence, 131 residues long: Anaerobic and virulence modulator AnvM (131 aa).

In terms of biological role, plays an essential role by modulating the expression of hundreds of genes including quorum sensing system genes and oxidative stress resistance genes under both aerobic and anaerobic conditions. This chain is Anaerobic and virulence modulator AnvM, found in Pseudomonas aeruginosa (strain ATCC 15692 / DSM 22644 / CIP 104116 / JCM 14847 / LMG 12228 / 1C / PRS 101 / PAO1).